The chain runs to 465 residues: Eukaryotic translation initiation factor 3 subunit M (465 aa).

The region spanning Glu-215 to Tyr-383 is the PCI domain. The segment at Ala-429–Asp-465 is disordered. Basic and acidic residues-rich tracts occupy residues Ser-433–Arg-448 and Gly-455–Asp-465.

The protein belongs to the eIF-3 subunit M family. In terms of assembly, component of the eukaryotic translation initiation factor 3 (eIF-3) complex.

The protein localises to the cytoplasm. Its function is as follows. Component of the eukaryotic translation initiation factor 3 (eIF-3) complex, which is involved in protein synthesis of a specialized repertoire of mRNAs and, together with other initiation factors, stimulates binding of mRNA and methionyl-tRNAi to the 40S ribosome. The eIF-3 complex specifically targets and initiates translation of a subset of mRNAs involved in cell proliferation. This Coccidioides immitis (strain RS) (Valley fever fungus) protein is Eukaryotic translation initiation factor 3 subunit M.